The following is a 370-amino-acid chain: DNA replication and repair protein RecF (370 aa).

33 to 40 provides a ligand contact to ATP; it reads GPNAAGKT.

It belongs to the RecF family.

The protein resides in the cytoplasm. Its function is as follows. The RecF protein is involved in DNA metabolism; it is required for DNA replication and normal SOS inducibility. RecF binds preferentially to single-stranded, linear DNA. It also seems to bind ATP. The polypeptide is DNA replication and repair protein RecF (Moorella thermoacetica (strain ATCC 39073 / JCM 9320)).